Here is a 162-residue protein sequence, read N- to C-terminus: Regulator of sigma D (162 aa).

The protein belongs to the Rsd/AlgQ family. Interacts with RpoD.

The protein resides in the cytoplasm. Functionally, binds RpoD and negatively regulates RpoD-mediated transcription activation by preventing the interaction between the primary sigma factor RpoD with the catalytic core of the RNA polymerase and with promoter DNA. May be involved in replacement of the RNA polymerase sigma subunit from RpoD to RpoS during the transition from exponential growth to the stationary phase. The sequence is that of Regulator of sigma D from Salmonella choleraesuis (strain SC-B67).